Reading from the N-terminus, the 452-residue chain is Probable V-type proton ATPase subunit H (452 aa).

The protein belongs to the V-ATPase H subunit family. V-ATPase is a heteromultimeric enzyme composed of a peripheral catalytic V1 complex (components A to H) attached to an integral membrane V0 proton pore complex (components: a, c, c', c'' and d).

Functionally, subunit of the peripheral V1 complex of vacuolar ATPase. Subunit H activates the ATPase activity of the enzyme and couples ATPase activity to proton flow. Vacuolar ATPase is responsible for acidifying a variety of intracellular compartments in eukaryotic cells, thus providing most of the energy required for transport processes in the vacuolar system. In Oryza sativa subsp. japonica (Rice), this protein is Probable V-type proton ATPase subunit H.